The following is a 266-amino-acid chain: Putative zinc finger protein 034R (266 aa).

Positions 84 to 176 (SPTKSVDKAA…GPKRDSTQQP (93 aa)) are disordered. The span at 88–100 (SVDKAAQKEKKMP) shows a compositional bias: basic and acidic residues. Polar residues-rich tracts occupy residues 105-119 (KPTT…QGIL) and 160-176 (GVSQ…TQQP). A C3H1-type zinc finger spans residues 180–192 (CKSVLKQAKCYFG).

This sequence belongs to the IIV-6 077L family.

The protein is Putative zinc finger protein 034R of Aedes vexans (Inland floodwater mosquito).